Reading from the N-terminus, the 619-residue chain is Chaperone protein DnaK (619 aa).

Position 175 is a phosphothreonine; by autocatalysis (Thr175). Residues 578–619 (NGGAQGQGFDPNNMGGANAGAGATNNNDDNVVDADFEVQDDK) form a disordered region. Positions 589 to 606 (NNMGGANAGAGATNNNDD) are enriched in low complexity. Over residues 607-619 (NVVDADFEVQDDK) the composition is skewed to acidic residues.

This sequence belongs to the heat shock protein 70 family.

Its function is as follows. Acts as a chaperone. The protein is Chaperone protein DnaK of Clostridium perfringens (strain ATCC 13124 / DSM 756 / JCM 1290 / NCIMB 6125 / NCTC 8237 / Type A).